Consider the following 634-residue polypeptide: Growth hormone receptor (634 aa).

The first 18 residues, 1-18 (MDLWQLLLTLAVAGSSDA), serve as a signal peptide directing secretion. The Extracellular segment spans residues 19-260 (FSGSEATPAF…NPSACEEDFQ (242 aa)). Residue asparagine 46 is glycosylated (N-linked (GlcNAc...) asparagine). An intrachain disulfide couples cysteine 56 to cysteine 66. The N-linked (GlcNAc...) asparagine glycan is linked to asparagine 73. An intrachain disulfide couples cysteine 97 to cysteine 108. Asparagine 111 is a glycosylation site (N-linked (GlcNAc...) asparagine). Residues cysteine 122 and cysteine 136 are joined by a disulfide bond. Residues 147 to 250 (PPVGLNWTLL…EVLLITFPQM (104 aa)) form the Fibronectin type-III domain. N-linked (GlcNAc...) asparagine glycosylation is found at asparagine 152, asparagine 157, and asparagine 196. The WSXWS motif signature appears at 236 to 240 (YGKFS). A helical membrane pass occupies residues 261–284 (FPWFLIIIFGILGLTVTLFLLIFS). Topologically, residues 285–634 (KQQRIKMLIL…STDQLNKIMP (350 aa)) are cytoplasmic. The interval 290 to 375 (KMLILPPVPV…HEKSLSIFGA (86 aa)) is required for JAK2 binding. Positions 293–301 (ILPPVPVPK) match the Box 1 motif motif. Positions 336-345 (DSWVEFIELD) match the UbE motif motif. Phosphoserine is present on serine 337. The segment at 451 to 471 (KPRPLPIGGTESTHQAVHTQL) is disordered. Residues 460-471 (TESTHQAVHTQL) show a composition bias toward polar residues. Residues tyrosine 483 and tyrosine 591 each carry the phosphotyrosine modification.

It belongs to the type I cytokine receptor family. Type 1 subfamily. As to quaternary structure, on growth hormone (GH) binding, forms homodimers and binds JAK2 via a box 1-containing domain. Post-translationally, the soluble form (GHBP) is produced by phorbol ester-promoted proteolytic cleavage at the cell surface (shedding) by ADAM17/TACE. Shedding is inhibited by growth hormone (GH) binding to the receptor probably due to a conformational change in GHR rendering the receptor inaccessible to ADAM17. On GH binding, phosphorylated on tyrosine residues in the cytoplasmic domain by JAK2. In terms of processing, ubiquitinated by the ECS(SOCS2) complex following ligand-binding and phosphorylation by JAK2, leading to its degradation by the proteasome. Regulation by the ECS(SOCS2) complex acts as a negative feedback loop of growth hormone receptor signaling. Ubiquitination is not sufficient for GHR internalization.

The protein localises to the cell membrane. It is found in the secreted. In terms of biological role, receptor for pituitary gland growth hormone (GH1) involved in regulating postnatal body growth. On ligand binding, couples to the JAK2/STAT5 pathway. Its function is as follows. The soluble form (GHBP) acts as a reservoir of growth hormone in plasma and may be a modulator/inhibitor of GH signaling. The chain is Growth hormone receptor (GHR) from Ovis aries (Sheep).